A 585-amino-acid polypeptide reads, in one-letter code: Pyruvate kinase (585 aa).

A substrate-binding site is contributed by Arg-32. K(+) is bound by residues Asn-34, Ser-36, Asp-66, and Thr-67. 34-37 is an ATP binding site; the sequence is NFSH. ATP-binding residues include Arg-73 and Lys-156. Glu-221 serves as a coordination point for Mg(2+). Positions 244, 245, and 277 each coordinate substrate. A Mg(2+)-binding site is contributed by Asp-245.

Belongs to the pyruvate kinase family. This sequence in the C-terminal section; belongs to the PEP-utilizing enzyme family. Mg(2+) is required as a cofactor. It depends on K(+) as a cofactor.

The enzyme catalyses pyruvate + ATP = phosphoenolpyruvate + ADP + H(+). It functions in the pathway carbohydrate degradation; glycolysis; pyruvate from D-glyceraldehyde 3-phosphate: step 5/5. The protein is Pyruvate kinase (pyk) of Staphylococcus aureus (strain USA300).